The following is a 202-amino-acid chain: Regulator of G-protein signaling 16 (202 aa).

2 S-palmitoyl cysteine lipidation sites follow: cysteine 2 and cysteine 12. In terms of domain architecture, RGS spans 65–181 (SFDLLLSSKN…LKSPAYRDLA (117 aa)). Tyrosine 168 carries the phosphotyrosine; by EGFR modification. Tyrosine 177 is subject to Phosphotyrosine. A disordered region spans residues 183–202 (QATAASASPSSSSPAEPLHT).

In terms of assembly, interacts with GNAI1 and GNAQ. Interacts with GNAI3, GNAI3 and GNAO1. In terms of processing, palmitoylated on Cys-2 and/or Cys-12. Phosphorylated. Phosphorylation at Tyr-168 by EGFR enhances GTPase accelerating (GAP) activity toward GNAI1.

The protein resides in the membrane. Its function is as follows. Regulates G protein-coupled receptor signaling cascades. Inhibits signal transduction by increasing the GTPase activity of G protein alpha subunits, thereby driving them into their inactive GDP-bound form. Plays an important role in the phototransduction cascade by regulating the lifetime and effective concentration of activated transducin alpha. May regulate extra and intracellular mitogenic signals. The polypeptide is Regulator of G-protein signaling 16 (RGS16) (Bos taurus (Bovine)).